Reading from the N-terminus, the 710-residue chain is Probable thimet oligopeptidase (710 aa).

H502 is a Zn(2+) binding site. E503 is an active-site residue. Zn(2+) is bound at residue H506.

It belongs to the peptidase M3 family. Zn(2+) is required as a cofactor.

The protein resides in the cytoplasm. It carries out the reaction Preferential cleavage of bonds with hydrophobic residues at P1, P2 and P3' and a small residue at P1' in substrates of 5 to 15 residues.. In terms of biological role, involved in cytoplasmic peptide degradation. The protein is Probable thimet oligopeptidase of Arabidopsis thaliana (Mouse-ear cress).